An 84-amino-acid polypeptide reads, in one-letter code: MKVVLIVCLVWVMAMMELVSCECWSQADCSDGHCCAGSSFSKNCRPYGGDGEQCGPRNKYEVYSTGCPYEENLMCSVINRCQSA.

The first 21 residues, 1–21 (MKVVLIVCLVWVMAMMELVSC), serve as a signal peptide directing secretion. Cystine bridges form between Cys-23/Cys-35, Cys-29/Cys-44, Cys-34/Cys-67, and Cys-54/Cys-75.

The protein belongs to the AVIT (prokineticin) family. In terms of tissue distribution, expressed by the venom gland.

It localises to the secreted. This chain is U8-theraphotoxin-Hhn1b, found in Cyriopagopus hainanus (Chinese bird spider).